The following is a 121-amino-acid chain: Basic phospholipase A2 (121 aa).

7 disulfides stabilise this stretch: Cys26-Cys114, Cys28-Cys44, Cys43-Cys94, Cys49-Cys121, Cys50-Cys87, Cys57-Cys80, and Cys74-Cys85. Tyr27, Gly29, and Gly31 together coordinate Ca(2+). Residue His47 is part of the active site. Asp48 provides a ligand contact to Ca(2+). The active site involves Asp88.

Homopentamer. The cofactor is Ca(2+). In terms of tissue distribution, expressed by the venom gland.

Its subcellular location is the secreted. The catalysed reaction is a 1,2-diacyl-sn-glycero-3-phosphocholine + H2O = a 1-acyl-sn-glycero-3-phosphocholine + a fatty acid + H(+). Functionally, snake venom phospholipase A2 (PLA2) that displays moderate myotoxic activity in vivo, and cytotoxic activity in vitro. In vitro, shows anticoagulant activity on human plasma and in mice causes inflammatory cell infiltration and myonecrosis in the gastrocnemius muscles of CD-1 mice 3 hours after injection (100 ug). PLA2 catalyzes the calcium-dependent hydrolysis of the 2-acyl groups in 3-sn-phosphoglycerides. The sequence is that of Basic phospholipase A2 from Porthidium ophryomegas (Slender hognose viper).